Consider the following 154-residue polypeptide: Deoxyuridine 5'-triphosphate nucleotidohydrolase (154 aa).

Substrate contacts are provided by residues 64 to 66 (RSG), Asn77, 81 to 83 (TVD), and Lys91.

This sequence belongs to the dUTPase family. As to quaternary structure, homotrimer. Mg(2+) is required as a cofactor.

The catalysed reaction is dUTP + H2O = dUMP + diphosphate + H(+). The protein operates within pyrimidine metabolism; dUMP biosynthesis; dUMP from dCTP (dUTP route): step 2/2. Functionally, this enzyme is involved in nucleotide metabolism: it produces dUMP, the immediate precursor of thymidine nucleotides and it decreases the intracellular concentration of dUTP so that uracil cannot be incorporated into DNA. This chain is Deoxyuridine 5'-triphosphate nucleotidohydrolase, found in Mycobacterium leprae (strain Br4923).